The primary structure comprises 1393 residues: DNA-directed RNA polymerase subunit beta' (1393 aa).

Cysteine 72, cysteine 74, cysteine 87, and cysteine 90 together coordinate Zn(2+). Mg(2+)-binding residues include aspartate 463, aspartate 465, and aspartate 467. Cysteine 812, cysteine 887, cysteine 894, and cysteine 897 together coordinate Zn(2+).

This sequence belongs to the RNA polymerase beta' chain family. In terms of assembly, the RNAP catalytic core consists of 2 alpha, 1 beta, 1 beta' and 1 omega subunit. When a sigma factor is associated with the core the holoenzyme is formed, which can initiate transcription. It depends on Mg(2+) as a cofactor. Zn(2+) is required as a cofactor.

The enzyme catalyses RNA(n) + a ribonucleoside 5'-triphosphate = RNA(n+1) + diphosphate. DNA-dependent RNA polymerase catalyzes the transcription of DNA into RNA using the four ribonucleoside triphosphates as substrates. The chain is DNA-directed RNA polymerase subunit beta' from Chlamydia pneumoniae (Chlamydophila pneumoniae).